Here is a 552-residue protein sequence, read N- to C-terminus: Gamma-aminobutyric acid receptor subunit alpha-4 (552 aa).

The signal sequence occupies residues M1 to G35. At Q36 to F259 the chain is on the extracellular side. A glycan (N-linked (GlcNAc...) asparagine) is linked at N47. R100 serves as a coordination point for 4-aminobutanoate. Residues N144 and N157 are each glycosylated (N-linked (GlcNAc...) asparagine). T163 is a 4-aminobutanoate binding site. A disulfide bridge connects residues C172 and C186. A helical transmembrane segment spans residues M260–I280. Residues N281–S284 are Cytoplasmic-facing. A helical transmembrane segment spans residues V285–S305. Over A306–A318 the chain is Extracellular. Residues M319 to N341 traverse the membrane as a helical segment. Topologically, residues Y342–K515 are cytoplasmic. Disordered stretches follow at residues K353–S436, A448–S470, and T486–T513. The segment covering R403–T423 has biased composition (polar residues). Composition is skewed to low complexity over residues A448 to S458 and T486 to A499. Positions T500–S509 are enriched in pro residues. The chain crosses the membrane as a helical span at residues I516–V538. At Y539–M552 the chain is on the extracellular side.

Belongs to the ligand-gated ion channel (TC 1.A.9) family. Gamma-aminobutyric acid receptor (TC 1.A.9.5) subfamily. GABRA4 sub-subfamily. Heteropentamer, formed by a combination of alpha (GABRA1-6), beta (GABRB1-3), gamma (GABRG1-3), delta (GABRD), epsilon (GABRE), rho (GABRR1-3), pi (GABRP) and theta (GABRQ) chains, each subunit exhibiting distinct physiological and pharmacological properties. As to expression, expressed in the brain.

It localises to the cell membrane. It is found in the postsynaptic cell membrane. Its activity is regulated as follows. Potentiated by histamine. Its function is as follows. Alpha subunit of the heteropentameric ligand-gated chloride channel gated by gamma-aminobutyric acid (GABA), a major inhibitory neurotransmitter in the brain. GABA-gated chloride channels, also named GABA(A) receptors (GABAAR), consist of five subunits arranged around a central pore and contain GABA active binding site(s) located at the alpha and beta subunit interface(s). Alpha-4/GABRA4 subunit often assembles with delta or gamma-2 subunits, in combination with beta subunits. When activated by GABA, GABAARs selectively allow the flow of chloride anions across the cell membrane down their electrochemical gradient. GABAARs containing alpha-4 are predominantly extrasynaptic, contributing to tonic inhibition in dentate granule cells and thalamic relay neurons. Extrasynaptic alpha-4-containing GABAARs control levels of excitability and network activity. GABAAR containing alpha-4-beta-3-delta subunits can simultaneously bind GABA and histamine where histamine binds at the interface of two neighboring beta subunits, which may be involved in the regulation of sleep and wakefulness. In Rattus norvegicus (Rat), this protein is Gamma-aminobutyric acid receptor subunit alpha-4.